The following is a 317-amino-acid chain: Probable cell division protein WhiA (317 aa).

Positions 281 to 314 form a DNA-binding region, H-T-H motif; the sequence is SLKELGQMLDPPVGKSGINHRLRRIEKIAEELRK.

The protein belongs to the WhiA family.

Its function is as follows. Involved in cell division and chromosome segregation. The protein is Probable cell division protein WhiA of Clostridium novyi (strain NT).